The following is a 907-amino-acid chain: Envelope glycoprotein B (907 aa).

Residues 1–24 (MESRIWCLVVCVNLCIVCLGAAVS) form the signal peptide. Topologically, residues 25–751 (SSSTRGTSAT…EGVATFLKNP (727 aa)) are virion surface. The segment at 29–62 (RGTSATHSHHSSHTTSAAHSRSGSVSQRVTSSQT) is disordered. Residues 41 to 62 (HTTSAAHSRSGSVSQRVTSSQT) are compositionally biased toward low complexity. N-linked (GlcNAc...) asparagine; by host glycans are attached at residues Asn-68, Asn-73, and Asn-85. Disulfide bonds link Cys-94–Cys-551, Cys-111–Cys-507, Cys-185–Cys-250, and Cys-344–Cys-391. The segment at 152–158 (SYAYIHT) is involved in fusion and/or binding to host membrane. A glycan (N-linked (GlcNAc...) asparagine; by host) is linked at Asn-208. The segment at 237 to 244 (GSTWLYRE) is involved in fusion and/or binding to host membrane. Asn-281, Asn-286, Asn-302, Asn-341, Asn-383, Asn-405, Asn-409, Asn-417, Asn-447, Asn-452, Asn-456, Asn-466, Asn-555, and Asn-586 each carry an N-linked (GlcNAc...) asparagine; by host glycan. The cysteines at positions 574 and 611 are disulfide-linked. The hydrophobic membrane proximal region stretch occupies residues 697–749 (VEDKVVDPLPPYLKGLDDLMSGLGAAGKAVGVAIGAVGGAVASVVEGVATFLK). A helical membrane pass occupies residues 752–772 (FGAFTIILVAIAVVIITYLIY). Over 773-907 (TRQRRLCTQP…LKDSDEEENV (135 aa)) the chain is Intravirion. 2 stretches are compositionally biased toward polar residues: residues 798-810 (VTSG…SLQA) and 860-877 (RAQQ…GTQD). Disordered stretches follow at residues 798–838 (VTSG…TAAP) and 857–907 (AEQR…EENV). Residues 878-887 (KGQKPNLLDR) are compositionally biased toward basic and acidic residues. Residues 895-898 (YRHL) carry the Internalization motif motif.

It belongs to the herpesviridae glycoprotein B family. In terms of assembly, homotrimer; disulfide-linked. Binds to heparan sulfate proteoglycans. Interacts with gH/gL heterodimer. Post-translationally, a proteolytic cleavage by host furin generates two subunits that remain linked by disulfide bonds.

It localises to the virion membrane. The protein localises to the host cell membrane. Its subcellular location is the host endosome membrane. The protein resides in the host Golgi apparatus membrane. In terms of biological role, envelope glycoprotein that forms spikes at the surface of virion envelope. Essential for the initial attachment to heparan sulfate moieties of the host cell surface proteoglycans. Involved in fusion of viral and cellular membranes leading to virus entry into the host cell. Following initial binding to its host receptors, membrane fusion is mediated by the fusion machinery composed at least of gB and the heterodimer gH/gL. May be involved in the fusion between the virion envelope and the outer nuclear membrane during virion egress. This is Envelope glycoprotein B from Human cytomegalovirus (strain Merlin) (HHV-5).